The primary structure comprises 272 residues: Small ribosomal subunit protein mS23 (272 aa).

The disordered stretch occupies residues 233-272; that stretch reads KENASKAAGDASAVSSEKQVEDDVVNFDESTDADQEVLHF. The span at 252-272 shows a compositional bias: acidic residues; that stretch reads VEDDVVNFDESTDADQEVLHF.

It belongs to the mitochondrion-specific ribosomal protein mS23 family. In terms of assembly, component of the mitochondrial small ribosomal subunit.

It is found in the mitochondrion. The polypeptide is Small ribosomal subunit protein mS23 (RSM25) (Candida glabrata (strain ATCC 2001 / BCRC 20586 / JCM 3761 / NBRC 0622 / NRRL Y-65 / CBS 138) (Yeast)).